The sequence spans 427 residues: UDP-N-acetylglucosamine 1-carboxyvinyltransferase 2 (427 aa).

Residue 19–20 participates in phosphoenolpyruvate binding; sequence KN. Arginine 91 is a binding site for UDP-N-acetyl-alpha-D-glucosamine. Cysteine 115 serves as the catalytic Proton donor. A 2-(S-cysteinyl)pyruvic acid O-phosphothioketal modification is found at cysteine 115. UDP-N-acetyl-alpha-D-glucosamine contacts are provided by aspartate 307 and valine 329.

The protein belongs to the EPSP synthase family. MurA subfamily.

It localises to the cytoplasm. It carries out the reaction phosphoenolpyruvate + UDP-N-acetyl-alpha-D-glucosamine = UDP-N-acetyl-3-O-(1-carboxyvinyl)-alpha-D-glucosamine + phosphate. Its pathway is cell wall biogenesis; peptidoglycan biosynthesis. Functionally, cell wall formation. Adds enolpyruvyl to UDP-N-acetylglucosamine. This chain is UDP-N-acetylglucosamine 1-carboxyvinyltransferase 2, found in Prochlorococcus marinus (strain SARG / CCMP1375 / SS120).